Reading from the N-terminus, the 301-residue chain is Probable porphobilinogen deaminase (301 aa).

Cysteine 241 bears the S-(dipyrrolylmethanemethyl)cysteine mark.

Belongs to the HMBS family. Requires dipyrromethane as cofactor.

It carries out the reaction 4 porphobilinogen + H2O = hydroxymethylbilane + 4 NH4(+). It functions in the pathway porphyrin-containing compound metabolism; protoporphyrin-IX biosynthesis; coproporphyrinogen-III from 5-aminolevulinate: step 2/4. Functionally, tetrapolymerization of the monopyrrole PBG into the hydroxymethylbilane pre-uroporphyrinogen in several discrete steps. The polypeptide is Probable porphobilinogen deaminase (Pyrobaculum islandicum (strain DSM 4184 / JCM 9189 / GEO3)).